Consider the following 225-residue polypeptide: Phosphoserine phosphatase (225 aa).

Met-1 is modified (N-acetylmethionine). The Nucleophile role is filled by Asp-20. 2 residues coordinate Mg(2+): Asp-20 and Asp-22. 20-22 provides a ligand contact to L-serine; sequence DVD. Catalysis depends on Asp-22, which acts as the Proton donor. Met-52 provides a ligand contact to O-phospho-L-serine. Position 53 (Gly-53) interacts with phosphate. L-serine contacts are provided by residues 109-111 and Lys-158; that span reads SGG. Residues 109-111 and Lys-158 contribute to the O-phospho-L-serine site; that span reads SGG. Asp-179 is a Mg(2+) binding site. Residue Thr-182 participates in O-phospho-L-serine binding. Residue Thr-182 participates in phosphate binding.

It belongs to the HAD-like hydrolase superfamily. SerB family. Homodimer. Mg(2+) is required as a cofactor.

The protein localises to the cytoplasm. It localises to the cytosol. It carries out the reaction O-phospho-L-serine + H2O = L-serine + phosphate. It catalyses the reaction O-phospho-D-serine + H2O = D-serine + phosphate. Its pathway is amino-acid biosynthesis; L-serine biosynthesis; L-serine from 3-phospho-D-glycerate: step 3/3. In terms of biological role, catalyzes the last irreversible step in the biosynthesis of L-serine from carbohydrates, the dephosphorylation of O-phospho-L-serine to L-serine. L-serine can then be used in protein synthesis, to produce other amino acids, in nucleotide metabolism or in glutathione synthesis, or can be racemized to D-serine, a neuromodulator. May also act on O-phospho-D-serine. This is Phosphoserine phosphatase from Bos taurus (Bovine).